A 349-amino-acid chain; its full sequence is tRNA N6-adenosine threonylcarbamoyltransferase (349 aa).

Residues His117 and His121 each contribute to the Fe cation site. Residues 140-144 (LVSGG), Asp173, Gly186, and Asn284 each bind substrate. A Fe cation-binding site is contributed by Asp312.

This sequence belongs to the KAE1 / TsaD family. Fe(2+) serves as cofactor.

Its subcellular location is the cytoplasm. The enzyme catalyses L-threonylcarbamoyladenylate + adenosine(37) in tRNA = N(6)-L-threonylcarbamoyladenosine(37) in tRNA + AMP + H(+). In terms of biological role, required for the formation of a threonylcarbamoyl group on adenosine at position 37 (t(6)A37) in tRNAs that read codons beginning with adenine. Is involved in the transfer of the threonylcarbamoyl moiety of threonylcarbamoyl-AMP (TC-AMP) to the N6 group of A37, together with TsaE and TsaB. TsaD likely plays a direct catalytic role in this reaction. The chain is tRNA N6-adenosine threonylcarbamoyltransferase from Psychrobacter arcticus (strain DSM 17307 / VKM B-2377 / 273-4).